Reading from the N-terminus, the 142-residue chain is MKTFTAKPETVKRDWFVVDAAGQTLGRLATEIASRLRGKHKPEYTPHVDTGDYIVVINAEQVRVTGAKTSDKMYYSHSGFPGGIKSINFEKLIAKAPERVIETAVKGMLPKNPLGRDMYRKLKVYKGANHPHTAQQPQELKI.

The protein belongs to the universal ribosomal protein uL13 family. Part of the 50S ribosomal subunit.

In terms of biological role, this protein is one of the early assembly proteins of the 50S ribosomal subunit, although it is not seen to bind rRNA by itself. It is important during the early stages of 50S assembly. The sequence is that of Large ribosomal subunit protein uL13 from Stutzerimonas stutzeri (strain A1501) (Pseudomonas stutzeri).